A 255-amino-acid polypeptide reads, in one-letter code: Sec-independent protein translocase protein TatC (255 aa).

The next 7 membrane-spanning stretches (helical) occupy residues 28-48, 56-76, 80-100, 121-141, 165-185, 195-212, and 216-236; these read VAAV…IYAL, YLPE…LAPF, LMIS…GFIA, LFYA…FGFF, LFFA…LIWV, NSRP…MVLT, and VFSQ…GVFF.

The protein belongs to the TatC family. The Tat system comprises two distinct complexes: a TatABC complex, containing multiple copies of TatA, TatB and TatC subunits, and a separate TatA complex, containing only TatA subunits. Substrates initially bind to the TatABC complex, which probably triggers association of the separate TatA complex to form the active translocon.

The protein localises to the cell membrane. In terms of biological role, part of the twin-arginine translocation (Tat) system that transports large folded proteins containing a characteristic twin-arginine motif in their signal peptide across membranes. Together with TatB, TatC is part of a receptor directly interacting with Tat signal peptides. This is Sec-independent protein translocase protein TatC from Azotobacter chroococcum mcd 1.